The following is a 191-amino-acid chain: MKYIEVDEELYRYIAGKTERIGESASDILRRLLGLSVAEVSEVAPVDISEPGMEHEPVQVREAEPEPVPEVEVAAQTEIDFSDLLSEAGLAAQKGAVGRFLYALECLHQAAPSRFEQVLQIQGRDRLYFATSKEALLKASQSANPKEIGSSGFWVTTNNNTAKKRTILEEALVQLGCDPVRAKSLGELALA.

The interval 96-97 (AV) is interaction with DNA.

The protein belongs to the SeqA family. Homodimer. Polymerizes to form helical filaments.

The protein localises to the cytoplasm. In terms of biological role, negative regulator of replication initiation, which contributes to regulation of DNA replication and ensures that replication initiation occurs exactly once per chromosome per cell cycle. Binds to pairs of hemimethylated GATC sequences in the oriC region, thus preventing assembly of replication proteins and re-initiation at newly replicated origins. Repression is relieved when the region becomes fully methylated. This chain is Negative modulator of initiation of replication, found in Shewanella amazonensis (strain ATCC BAA-1098 / SB2B).